Consider the following 389-residue polypeptide: Phosphopentomutase (389 aa).

Mn(2+) is bound by residues D10, D282, H287, D323, H324, and H335.

Belongs to the phosphopentomutase family. Requires Mn(2+) as cofactor.

Its subcellular location is the cytoplasm. It catalyses the reaction 2-deoxy-alpha-D-ribose 1-phosphate = 2-deoxy-D-ribose 5-phosphate. It carries out the reaction alpha-D-ribose 1-phosphate = D-ribose 5-phosphate. The protein operates within carbohydrate degradation; 2-deoxy-D-ribose 1-phosphate degradation; D-glyceraldehyde 3-phosphate and acetaldehyde from 2-deoxy-alpha-D-ribose 1-phosphate: step 1/2. Its function is as follows. Isomerase that catalyzes the conversion of deoxy-ribose 1-phosphate (dRib-1-P) and ribose 1-phosphate (Rib-1-P) to deoxy-ribose 5-phosphate (dRib-5-P) and ribose 5-phosphate (Rib-5-P), respectively. This Clostridium kluyveri (strain NBRC 12016) protein is Phosphopentomutase.